Here is a 159-residue protein sequence, read N- to C-terminus: MKAVADTLGVSRSNLIERLKGRSKPRGPYNKAEDAELLPAIRRLVDQRPTYGYRRIAASSIAKGEPPISLSSTPNGSIASWVTTPCYWRSTQPFARAASTMARSWSCAPTCAGARTAWSSPAGMARSFVSPSSSTPSTARSSPGRPLPMQAFPAQTCAT.

Residues 126 to 142 (RSFVSPSSSTPSTARSS) show a composition bias toward low complexity. The tract at residues 126–159 (RSFVSPSSSTPSTARSSPGRPLPMQAFPAQTCAT) is disordered.

This chain is Insertion element IS136 uncharacterized 16.9 kDa protein, found in Agrobacterium tumefaciens (strain T37).